A 132-amino-acid chain; its full sequence is UPF0299 membrane protein YohJ (132 aa).

A run of 4 helical transmembrane segments spans residues 7-27 (IIWQ…AGIF), 31-51 (LLPI…VLLA), 63-83 (GCYV…VGVM), and 93-113 (FGPV…VVSW).

Belongs to the UPF0299 family.

The protein resides in the cell inner membrane. The chain is UPF0299 membrane protein YohJ from Salmonella arizonae (strain ATCC BAA-731 / CDC346-86 / RSK2980).